The primary structure comprises 119 residues: Protein FATTY ACID EXPORT 6 (119 aa).

The next 3 helical transmembrane spans lie at 27–47 (SITS…AGYI), 57–77 (NSTI…LVMG), and 84–104 (GKIM…CFYV).

The protein belongs to the TMEM14 family.

It localises to the membrane. In terms of biological role, may be involved in free fatty acids export. The chain is Protein FATTY ACID EXPORT 6 from Arabidopsis thaliana (Mouse-ear cress).